We begin with the raw amino-acid sequence, 300 residues long: GTP cyclohydrolase FolE2 (300 aa).

This sequence belongs to the GTP cyclohydrolase IV family.

It catalyses the reaction GTP + H2O = 7,8-dihydroneopterin 3'-triphosphate + formate + H(+). Its pathway is cofactor biosynthesis; 7,8-dihydroneopterin triphosphate biosynthesis; 7,8-dihydroneopterin triphosphate from GTP: step 1/1. Converts GTP to 7,8-dihydroneopterin triphosphate. This is GTP cyclohydrolase FolE2 from Bacillus licheniformis (strain ATCC 14580 / DSM 13 / JCM 2505 / CCUG 7422 / NBRC 12200 / NCIMB 9375 / NCTC 10341 / NRRL NRS-1264 / Gibson 46).